Here is a 423-residue protein sequence, read N- to C-terminus: MDRGQPSLEPAAAAPRASGRCVIAPVRAVLRLRRRVCVLRKRRLLQPGGGPDVGTGAPRPGCSPRAPRADLDQPKFFTFDSPAELPSRTPRKKRRRSRLVLYPETSRKYRPRVEHRSRAQRCLLLLVAIVGFQVLNAIENLDDNAQRYDLDGLEKALQRAVFGQPAAVSRIVALMRDYLATHVHSRPLLLALHGPSGVGKSHVGRLLARHFRSVLEDSALVLQYHARHHCPEARAAQDCREELARRVADVVARAEAEEKTPLLVLDDVELMPRPLLDELHGFLQPQRSHHFHNAIYVLLSGAGGAEVTRFVLQNASRALPLRPDGFRSAEAAAAQAEEDLRASLLAVLSREHPLWQAAAIVPFLLLDKRDVVSCFRDEMAGEGFFPDQARAENLAAQLSFYRVAGREFAVTGCKQVVATVNLL.

Residues proline 47 to arginine 68 form a disordered region. 2 positions are modified to phosphoserine: serine 63 and serine 81. Threonine 89 bears the Phosphothreonine mark. Serine 106 carries the post-translational modification Phosphoserine. Residues cysteine 122–isoleucine 138 form a helical membrane-spanning segment. Residue glycine 194 to serine 201 coordinates ATP.

This sequence belongs to the ClpA/ClpB family. Torsin subfamily.

It localises to the membrane. The polypeptide is Torsin-4A (TOR4A) (Homo sapiens (Human)).